The following is a 341-amino-acid chain: Anthranilate phosphoribosyltransferase (341 aa).

Residues Gly-81, 84–85 (GD), 91–94 (NVST), 109–117 (KHGNRSVSS), and Ser-121 each bind 5-phospho-alpha-D-ribose 1-diphosphate. Gly-81 provides a ligand contact to anthranilate. Position 93 (Ser-93) interacts with Mg(2+). Asn-112 is an anthranilate binding site. Arg-167 is a binding site for anthranilate. Asp-226 and Glu-227 together coordinate Mg(2+).

Belongs to the anthranilate phosphoribosyltransferase family. As to quaternary structure, homodimer. Mg(2+) serves as cofactor.

The catalysed reaction is N-(5-phospho-beta-D-ribosyl)anthranilate + diphosphate = 5-phospho-alpha-D-ribose 1-diphosphate + anthranilate. It participates in amino-acid biosynthesis; L-tryptophan biosynthesis; L-tryptophan from chorismate: step 2/5. Catalyzes the transfer of the phosphoribosyl group of 5-phosphorylribose-1-pyrophosphate (PRPP) to anthranilate to yield N-(5'-phosphoribosyl)-anthranilate (PRA). The sequence is that of Anthranilate phosphoribosyltransferase from Saccharophagus degradans (strain 2-40 / ATCC 43961 / DSM 17024).